Reading from the N-terminus, the 446-residue chain is Probable D-serine dehydratase (446 aa).

N6-(pyridoxal phosphate)lysine is present on K116.

Belongs to the serine/threonine dehydratase family. DsdA subfamily. Requires pyridoxal 5'-phosphate as cofactor.

It catalyses the reaction D-serine = pyruvate + NH4(+). The sequence is that of Probable D-serine dehydratase from Bacillus cereus (strain ZK / E33L).